Consider the following 334-residue polypeptide: O-methyltransferase SfmM3 (334 aa).

S-adenosyl-L-methionine-binding positions include aspartate 190 and glycine 216–phenylalanine 218. Catalysis depends on histidine 236, which acts as the Proton acceptor.

It belongs to the class I-like SAM-binding methyltransferase superfamily. Cation-independent O-methyltransferase family. COMT subfamily.

The catalysed reaction is 5-hydroxy-3-methyl-L-tyrosine + S-adenosyl-L-methionine = 5-hydroxy-3-methyl-O-methyl-L-tyrosine + S-adenosyl-L-homocysteine + H(+). Its pathway is antibiotic biosynthesis. Its function is as follows. O-methyltransferase that mediates the methylation of 3-hydroxy-5-methyl-L-tyrosine (3-OH-5-Me-Tyr) into 3-hydroxy-5-methyl-O-methyltyrosine (3-OH-5-Me-OMe-Tyr), a core structure of saframycin A, a potent antitumor antibiotic that belongs to the tetrahydroisoquinoline family. In Streptomyces lavendulae, this protein is O-methyltransferase SfmM3.